The sequence spans 114 residues: Small ribosomal subunit protein bS16 (114 aa).

The tract at residues 87 to 114 is disordered; sequence AFREQPVQSAPKKKAQERAAERAKAAEA. Over residues 100-114 the composition is skewed to basic and acidic residues; it reads KAQERAAERAKAAEA.

This sequence belongs to the bacterial ribosomal protein bS16 family.

This chain is Small ribosomal subunit protein bS16, found in Acidiphilium cryptum (strain JF-5).